A 345-amino-acid chain; its full sequence is MSLFGLLLLTSALAGQRQGTQAESNLSSKFQFSSNKEQNGVQDPQHERIITVSTNGSIHSPRFPHTYPRNTVLVWRLVAVEENVWIQLTFDERFGLEDPEDDICKYDFVEVEEPSDGTILGRWCGSGTVPGKQISKGNQIRIRFVSDEYFPSEPGFCIHYNIVMPQFTEAVSPSVLPPSALPLDLLNNAITAFSTLEDLIRYLEPERWQLDLEDLYRPTWQLLGKAFVFGRKSRVVDLNLLTEEVRLYSCTPRNFSVSIREELKRTDTIFWPGCLLVKRCGGNCACCLHNCNECQCVPSKVTKKYHEVLQLRPKTGVRGLHKSLTDVALEHHEECDCVCRGSTGG.

The signal sequence occupies residues 1–22 (MSLFGLLLLTSALAGQRQGTQA). Residues Asn25 and Asn55 are each glycosylated (N-linked (GlcNAc...) asparagine). The region spanning 46–163 (HERIITVSTN…PGFCIHYNIV (118 aa)) is the CUB domain. Intrachain disulfides connect Cys104–Cys124, Cys250–Cys294, Cys280–Cys335, and Cys287–Cys337.

This sequence belongs to the PDGF/VEGF growth factor family. As to quaternary structure, homodimer; disulfide-linked. Interacts with PDGFRA homodimers, and with heterodimers formed by PDGFRA and PDGFRB. Interacts (via CUB domain) with PLAT (via kringle domain). Proteolytic removal of the N-terminal CUB domain releasing the core domain is necessary for unmasking the receptor-binding epitopes of the core domain. Cleavage after basic residues in the hinge region (region connecting the CUB and growth factor domains) gives rise to the receptor-binding form. Cleaved by PLAT and PLG. In terms of processing, sumoylated with SUMO1. Post-translationally, N-glycosylated. In terms of tissue distribution, expressed in the fallopian tube, vascular smooth muscle cells in kidney, breast and colon and in visceral smooth muscle of the gastrointestinal tract. Highly expressed in retinal pigment epithelia. Expressed in medulloblastoma. In the kidney, constitutively expressed in parietal epithelial cells of Bowman's capsule, tubular epithelial cells and in arterial endothelial cells (at protein level). Highly expressed in the platelets, prostate, testis and uterus. Higher expression is observed in uterine leiomyomata. Weaker expression in the spleen, thymus, heart, pancreas, liver, ovary cells and small intestine, and negligible expression in the colon and peripheral blood leukocytes.

It localises to the cytoplasm. The protein resides in the cytosol. Its subcellular location is the secreted. It is found in the nucleus. The protein localises to the cytoplasmic granule. It localises to the cell membrane. Growth factor that plays an essential role in the regulation of embryonic development, cell proliferation, cell migration, survival and chemotaxis. Potent mitogen and chemoattractant for cells of mesenchymal origin. Required for normal skeleton formation during embryonic development, especially for normal development of the craniofacial skeleton and for normal development of the palate. Required for normal skin morphogenesis during embryonic development. Plays an important role in wound healing, where it appears to be involved in three stages: inflammation, proliferation and remodeling. Plays an important role in angiogenesis and blood vessel development. Involved in fibrotic processes, in which transformation of interstitial fibroblasts into myofibroblasts plus collagen deposition occurs. The CUB domain has mitogenic activity in coronary artery smooth muscle cells, suggesting a role beyond the maintenance of the latency of the PDGF domain. In the nucleus, PDGFC seems to have additional function. The polypeptide is Platelet-derived growth factor C (PDGFC) (Homo sapiens (Human)).